The following is a 232-amino-acid chain: Enolase-phosphatase E1 (232 aa).

It belongs to the HAD-like hydrolase superfamily. MasA/MtnC family. As to quaternary structure, monomer. The cofactor is Mg(2+).

It carries out the reaction 5-methylsulfanyl-2,3-dioxopentyl phosphate + H2O = 1,2-dihydroxy-5-(methylsulfanyl)pent-1-en-3-one + phosphate. It functions in the pathway amino-acid biosynthesis; L-methionine biosynthesis via salvage pathway; L-methionine from S-methyl-5-thio-alpha-D-ribose 1-phosphate: step 3/6. Its pathway is amino-acid biosynthesis; L-methionine biosynthesis via salvage pathway; L-methionine from S-methyl-5-thio-alpha-D-ribose 1-phosphate: step 4/6. Bifunctional enzyme that catalyzes the enolization of 2,3-diketo-5-methylthiopentyl-1-phosphate (DK-MTP-1-P) into the intermediate 2-hydroxy-3-keto-5-methylthiopentenyl-1-phosphate (HK-MTPenyl-1-P), which is then dephosphorylated to form the acireductone 1,2-dihydroxy-3-keto-5-methylthiopentene (DHK-MTPene). In Xanthomonas campestris pv. campestris (strain B100), this protein is Enolase-phosphatase E1.